A 320-amino-acid polypeptide reads, in one-letter code: Malate dehydrogenase 2 (320 aa).

NAD(+) is bound by residues 10–15 (GAGQIG) and aspartate 34. Substrate-binding residues include arginine 83 and arginine 89. Residues asparagine 96 and 119–121 (ITN) contribute to the NAD(+) site. Substrate is bound by residues asparagine 121 and arginine 152. Residue histidine 176 is the Proton acceptor of the active site.

Belongs to the LDH/MDH superfamily. MDH type 3 family.

It carries out the reaction (S)-malate + NAD(+) = oxaloacetate + NADH + H(+). Its function is as follows. Catalyzes the reversible oxidation of malate to oxaloacetate. In Rhodopseudomonas palustris (strain BisB18), this protein is Malate dehydrogenase 2.